The sequence spans 122 residues: Large ribosomal subunit protein uL14 (122 aa).

This sequence belongs to the universal ribosomal protein uL14 family. Part of the 50S ribosomal subunit. Forms a cluster with proteins L3 and L19. In the 70S ribosome, L14 and L19 interact and together make contacts with the 16S rRNA in bridges B5 and B8.

Binds to 23S rRNA. Forms part of two intersubunit bridges in the 70S ribosome. In Thermosipho africanus (strain TCF52B), this protein is Large ribosomal subunit protein uL14.